Here is a 471-residue protein sequence, read N- to C-terminus: Cytolysin (471 aa).

Residues 1 to 20 (MKKMTLFTLSLLATAVQVGA) form the signal peptide. A Ricin B-type lectin domain is found at 338–465 (AHVTLQSLSN…EANQARWKPT (128 aa)).

The protein belongs to the HlyA hemolysin family.

Its function is as follows. Bacterial hemolysins are exotoxins that attack blood cell membranes and cause cell rupture by mechanisms not clearly defined. The protein is Cytolysin (vvhA) of Vibrio vulnificus (strain CMCP6).